The following is a 759-amino-acid chain: MKKKIESYQGAAGGWGAVKSVANAVRKQMDIRHDVIAMFDMNKPEGFDCPGCAWPDPKNSASFDICENGAKAIAWEVTDKQVNASFFAENTVQSLLTWGDHELEAAGRLTQPLKYDAVSDCYKPLSWQQAFDEIGARLQSYSDPNQVEFYTSGRTSNEAAFLYQLFAREYGSNNFPDCSNMCHEPTSVGLAASIGVGKGTVLLEDFEKCDLVICIGHNPGTNHPRMLTSLRALVKRGAKMIAINPLQERGLERFTAPQNPFEMLTNSETQLASAYYNVRIGGDMALLKGMMRLLIERDDAASAAGRPSLLDDEFIQTHTVGFDELRRDVLNSEWKDIERISGLSQTQIAELADAYAAAERTIICYGMGITQHEHGTQNVQQLVNLLLMKGNIGKPGAGICPLRGHSNVQGDRTVGITEKPSAEFLARLGERYGFPPPHAPGHAAIASMQAICTGQARALICMGGNFALAMPDREASAVPLTQLDLAVHVATKLNRSHLLTARHSYILPVLGRSEIDMQKSGAQAVTVEDSMSMIHASRGVLKPAGVMLKSECAVVAGIAQAALPQSVVAWEYLVEDYDRIRNDIEAVLPEFADYNQRIRHPGGFHLINAAAERRWMTPSGKANFITSKGLLEDPSSAFNSKLVMATVRSHDQYNTTIYGMDDRYRGVFGQRDVVFMSAKQAKICRVKNGERVNLIALTPDGKRSSRRMDRLKVVIYPMADRSLVTYFPESNHMLTLDNHDPLSGIPGYKSIPVELEPSN.

Positions 49 and 52 each coordinate [4Fe-4S] cluster.

It belongs to the prokaryotic molybdopterin-containing oxidoreductase family. Requires [4Fe-4S] cluster as cofactor. Mo-bis(molybdopterin guanine dinucleotide) serves as cofactor.

Functionally, probably involved in acid resistance. In Shigella flexneri, this protein is Protein YdeP (ydeP).